An 812-amino-acid polypeptide reads, in one-letter code: 1,4-alpha-glucan branching enzyme GlgB (812 aa).

The span at 1 to 11 shows a compositional bias: polar residues; that stretch reads MNNGDVNNGTA. Residues 1–83 form a disordered region; that stretch reads MNNGDVNNGT…SALPADPPAV (83 aa). The segment covering 49-64 has biased composition (low complexity); the sequence is SSASAQPGQTADDPAV. The segment covering 65–83 has biased composition (pro residues); the sequence is PSAPPSAPPSALPADPPAV. Asp490 acts as the Nucleophile in catalysis. Glu543 acts as the Proton donor in catalysis.

Belongs to the glycosyl hydrolase 13 family. GlgB subfamily. Monomer.

The catalysed reaction is Transfers a segment of a (1-&gt;4)-alpha-D-glucan chain to a primary hydroxy group in a similar glucan chain.. It participates in glycan biosynthesis; glycogen biosynthesis. Its function is as follows. Catalyzes the formation of the alpha-1,6-glucosidic linkages in glycogen by scission of a 1,4-alpha-linked oligosaccharide from growing alpha-1,4-glucan chains and the subsequent attachment of the oligosaccharide to the alpha-1,6 position. The protein is 1,4-alpha-glucan branching enzyme GlgB of Frankia casuarinae (strain DSM 45818 / CECT 9043 / HFP020203 / CcI3).